The chain runs to 926 residues: Progesterone receptor (926 aa).

The interval 1 to 48 (MTELQAKDPQVLHTSGASPSPPHIGSPLLARLDSGPFQGSQHSDVSSV) is disordered. The tract at residues 1–165 (MTELQAKDPQ…PATKGLLSPL (165 aa)) is AF3; mediates transcriptional activation (in isoform B). Residues 1–559 (MTELQAKDPQ…YGFDSLPQKI (559 aa)) are modulating, Pro-Rich. A Glycyl lysine isopeptide (Lys-Gly) (interchain with G-Cter in SUMO) cross-link involves residue K7. S20 is modified (phosphoserine). The short motif at 56 to 60 (LDGLL) is the LXXL motif 1 element. S82 bears the Phosphoserine mark. An LXXL motif 1 motif is present at residues 116-120 (LDSLL). Phosphoserine is present on residues S131 and S163. Residues 166–305 (MSRPEIKAGD…LATTVVDFIH (140 aa)) form a mediates transcriptional transrepression (in isoform A) region. The tract at residues 168–256 (RPEIKAGDSS…GTGSGGGVAA (89 aa)) is disordered. The Nuclear localization signal signature appears at 184–188 (KVLPK). S191 and S214 each carry phosphoserine. S294 carries the phosphoserine; by MAPK1 modification. The interval 327-364 (DSYDGGATAQGPFAPPRGSPSAPSPPVPCGDFPDCTYP) is disordered. Residues 339–354 (FAPPRGSPSAPSPPVP) show a composition bias toward pro residues. Residue S345 is modified to Phosphoserine; by MAPK. Residue K388 forms a Glycyl lysine isopeptide (Lys-Gly) (interchain with G-Cter in SUMO); alternate linkage. A Glycyl lysine isopeptide (Lys-Gly) (interchain with G-Cter in ubiquitin); alternate cross-link involves residue K388. The interval 391–447 (EEGADAAVRSPRPYLSAGASSSTFPDFPLAPAPQRAPSSRPGEAAVAGGPSSAAVSP) is disordered. Residue S400 is modified to Phosphoserine; by CDK2. Residues 422-447 (APQRAPSSRPGEAAVAGGPSSAAVSP) are compositionally biased toward low complexity. Residues 453 to 539 (SALECILYKA…VYPPYLNYLR (87 aa)) form an AF1; mediates transcriptional activation region. Residue K524 forms a Glycyl lysine isopeptide (Lys-Gly) (interchain with G-Cter in SUMO) linkage. A DNA-binding region (nuclear receptor) is located at residues 557–632 (QKICLICGDE…AGMVLGGRKF (76 aa)). 2 consecutive NR C4-type zinc fingers follow at residues 560–580 (CLIC…CGSC) and 596–615 (CAGR…CPAC). Residue S669 is modified to Phosphoserine. The NR LBD domain occupies 672–906 (QEIQLVPPLI…EFPEMMSEVI (235 aa)). Residues 673-926 (EIQLVPPLIN…MVKPLLFHKK (254 aa)) are AF2; mediates transcriptional activation. Residue R759 coordinates progesterone.

It belongs to the nuclear hormone receptor family. NR3 subfamily. In terms of assembly, interacts with SMARD1 and UNC45A. Interacts with CUEDC2; the interaction promotes ubiquitination, decreases sumoylation, and represses transcriptional activity. Interacts with PIAS3; the interaction promotes sumoylation of PR in a hormone-dependent manner, inhibits DNA-binding, and alters nuclear export. Interacts with SP1; the interaction requires ligand-induced phosphorylation on Ser-294 by ERK1/2 MAPK. Interacts with PRMT2. Isoform A interacts with NCOR2. Isoform B (but not isoform A) interacts with NCOA2 and NCOA1. Isoform B (but not isoform A) interacts with KLF9. In terms of processing, phosphorylated on multiple serine sites. Several of these sites are hormone-dependent. Phosphorylation on Ser-294 is highly hormone-dependent and modulates ubiquitination and sumoylation on Lys-388. Phosphorylation on Ser-345 also requires induction by hormone. Basal phosphorylation on Ser-82, Ser-163, Ser-191 and Ser-400 is increased in response to progesterone and can be phosphorylated in vitro by the CDK2-A1 complex. Increased levels of phosphorylation on Ser-400 also in the presence of EGF, heregulin, IGF, PMA and FBS. Phosphorylation at this site by CDK2 is ligand-independent, and increases nuclear translocation and transcriptional activity. Phosphorylation at Ser-163 and Ser-294, but not at Ser-191, is impaired during the G(2)/M phase of the cell cycle. Phosphorylation on Ser-345 by ERK1/2 MAPK is required for interaction with SP1. Post-translationally, sumoylation is hormone-dependent and represses transcriptional activity. Sumoylation on all three sites is enhanced by PIAS3. Desumoylated by SENP1. Sumoylation on Lys-388, the main site of sumoylation, is repressed by ubiquitination on the same site, and modulated by phosphorylation at Ser-294. Ubiquitination is hormone-dependent and represses sumoylation on the same site. Promoted by MAPK-mediated phosphorylation on Ser-294. Ubiquitinated by UBR5, leading to its degradation: UBR5 specifically recognizes and binds ligand-bound PGR when it is not associated with coactivators (NCOAs). In presence of NCOAs, the UBR5-degron is not accessible, preventing its ubiquitination and degradation. In terms of processing, palmitoylated by ZDHHC7 and ZDHHC21. Palmitoylation is required for plasma membrane targeting and for rapid intracellular signaling via ERK and AKT kinases and cAMP generation. In terms of tissue distribution, expression of isoform A and isoform B in mammary epithelial cells is temporally and spatially separated during normal mammary gland development. Isoform A and isoform B are expressed in the pituitary. Isoform A and isoform B are differentially expressed in the ovary and oviduct, and the level of expression is dependent on both the cell type and estrous cycle stage.

Its subcellular location is the nucleus. It localises to the cytoplasm. Functionally, the steroid hormones and their receptors are involved in the regulation of eukaryotic gene expression and affect cellular proliferation and differentiation in target tissues. Depending on the isoform, progesterone receptor functions as a transcriptional activator or repressor. In terms of biological role, ligand-dependent transdominant repressor of steroid hormone receptor transcriptional activity including repression of its isoform B, MR and ER. Transrepressional activity may involve recruitment of corepressor NCOR2. Its function is as follows. Transcriptional activator of several progesteron-dependent promoters in a variety of cell types. Involved in activation of SRC-dependent MAPK signaling on hormone stimulation. This Mus musculus (Mouse) protein is Progesterone receptor (Pgr).